Here is a 1264-residue protein sequence, read N- to C-terminus: Phosphatidylinositol 3,4,5-trisphosphate 5-phosphatase 2 (1264 aa).

Residues 26–122 enclose the SH2 domain; it reads WYHRDLSRAA…GLVCALLLPV (97 aa). The segment covering 124–137 has biased composition (basic and acidic residues); the sequence is REREPDPPDDRDVS. A disordered region spans residues 124 to 182; that stretch reads REREPDPPDDRDVSDGEDEKPPLPPRSGSTSISAPVGPGSPPAAPETPTTPAAESAPNG. S137 carries the post-translational modification Phosphoserine. Positions 169–180 are enriched in low complexity; sequence ETPTTPAAESAP. At T170 the chain carries Phosphothreonine. Phosphoserine occurs at positions 246 and 358. The residue at position 892 (Y892) is a Phosphotyrosine. A Phosphoserine modification is found at S896. The segment at 903-1123 is disordered; it reads GAKSKAPSVS…TFLGEVASGD (221 aa). Over residues 944–954 the composition is skewed to pro residues; the sequence is PPPTGRPPAPP. The short motif at 950-955 is the SH3-binding element; it reads PPAPPR. The segment covering 957–971 has biased composition (basic and acidic residues); sequence ASREEPLTPRLKAEG. Position 964 is a phosphothreonine (T964). The NPXY motif motif lies at 989–992; the sequence is NPAY. At Y992 the chain carries Phosphotyrosine. Pro residues-rich tracts occupy residues 1002-1017, 1054-1065, and 1093-1110; these read LLPP…PVPP, LPPPDFPPPPLP, and GPPP…PGPS. A Phosphoserine modification is found at S1137. The segment at 1140–1178 is disordered; the sequence is DYAPAGPGRSVLLPGPLELQPPRGLPSDYGRPLSFPPPR. Phosphotyrosine is present on residues Y1141 and Y1168. Residues 1210–1264 enclose the SAM domain; sequence WLRAIGLERYEEGLVHNGWDDLEFLSDITEEDLEEAGVQDPAHKRLLLDTLQLSK. A Phosphoserine modification is found at S1263.

It belongs to the inositol 1,4,5-trisphosphate 5-phosphatase family. Interacts with tyrosine phosphorylated form of SHC1. Interacts with EGFR. Upon stimulation by the EGF signaling pathway, it forms a complex with SHC1 and EGFR. Interacts with cytoskeletal protein SORBS3/vinexin, promoting its localization to the periphery of cells. Forms a complex with filamin (FLNA or FLNB), actin, GPIb (GP1BA or GP1BB) that regulates cortical and submembraneous actin. Interacts with c-Met/MET, when c-Met/MET is phosphorylated on 'Tyr-1356'. Interacts with p130Cas/BCAR1. Interacts with CENTD3/ARAP3 via its SAM domain. Interacts with c-Cbl/CBL and CAP/SORBS1. Interacts with activated EPHA2 receptor. Interacts with receptor FCGR2A. Interacts with receptor FCGR2B. Interacts with tyrosine kinase ABL1. Interacts with tyrosine kinase TEC. Interacts with CSF1R. Interacts (via N-terminus) with SH3YL1 (via SH3 domain). Interacts with FCRL6 (tyrosine phosphorylated form). Interacts (via SH2 domain) with tyrosine phosphorylated KLRC1 (via ITIM). Interacts with NEDD9/HEF1. Post-translationally, tyrosine phosphorylated by the members of the SRC family after exposure to a diverse array of extracellular stimuli such as insulin, growth factors such as EGF or PDGF, chemokines, integrin ligands and hypertonic and oxidative stress. May be phosphorylated upon IgG receptor FCGR2B-binding. Phosphorylated at Tyr-992 following cell attachment and spreading. Phosphorylated at Tyr-1168 following EGF signaling pathway stimulation. Phosphorylated at Thr-964 in response to PDGF.

The protein resides in the cytoplasm. It is found in the cytosol. The protein localises to the membrane. It localises to the cell projection. Its subcellular location is the filopodium. The protein resides in the lamellipodium. It is found in the basal cell membrane. The protein localises to the nucleus. It localises to the nucleus speckle. Its subcellular location is the cytoskeleton. The protein resides in the spindle pole. It catalyses the reaction a 1,2-diacyl-sn-glycero-3-phospho-(1D-myo-inositol-3,4,5-trisphosphate) + H2O = a 1,2-diacyl-sn-glycero-3-phospho-(1D-myo-inositol-3,4-bisphosphate) + phosphate. It carries out the reaction 1,2-dioctanoyl-sn-glycero-3-phospho-(1D-myo-inositol-3,4,5-trisphosphate) + H2O = 1,2-dioctanoyl-sn-glycero-3-phospho-(1D-myo-inositol-3,4-bisphosphate) + phosphate. The enzyme catalyses 1,2-dihexadecanoyl-sn-glycero-3-phospho-(1D-myo-inositol-3,4,5-trisphosphate) + H2O = 1,2-dihexadecanoyl-sn-glycero-3-phospho-(1D-myo-inositol-3,4-bisphosphate) + phosphate. Its activity is regulated as follows. Activated upon translocation to the sites of synthesis of PtdIns(3,4,5)P3 in the membrane. Enzymatic activity is enhanced in the presence of phosphatidylserine. Phosphatidylinositol (PtdIns) phosphatase that specifically hydrolyzes the 5-phosphate of phosphatidylinositol-3,4,5-trisphosphate (PtdIns(3,4,5)P3) to produce PtdIns(3,4)P2, thereby negatively regulating the PI3K (phosphoinositide 3-kinase) pathways. Required for correct mitotic spindle orientation and therefore progression of mitosis. Plays a central role in regulation of PI3K-dependent insulin signaling, although the precise molecular mechanisms and signaling pathways remain unclear. While overexpression reduces both insulin-stimulated MAP kinase and Akt activation, its absence does not affect insulin signaling or GLUT4 trafficking. Confers resistance to dietary obesity. May act by regulating AKT2, but not AKT1, phosphorylation at the plasma membrane. Part of a signaling pathway that regulates actin cytoskeleton remodeling. Required for the maintenance and dynamic remodeling of actin structures as well as in endocytosis, having a major impact on ligand-induced EGFR internalization and degradation. Participates in regulation of cortical and submembraneous actin by hydrolyzing PtdIns(3,4,5)P3 thereby regulating membrane ruffling. Regulates cell adhesion and cell spreading. Required for HGF-mediated lamellipodium formation, cell scattering and spreading. Acts as a negative regulator of EPHA2 receptor endocytosis by inhibiting via PI3K-dependent Rac1 activation. Acts as a regulator of neuritogenesis by regulating PtdIns(3,4,5)P3 level and is required to form an initial protrusive pattern, and later, maintain proper neurite outgrowth. Acts as a negative regulator of the FC-gamma-RIIA receptor (FCGR2A). Mediates signaling from the FC-gamma-RIIB receptor (FCGR2B), playing a central role in terminating signal transduction from activating immune/hematopoietic cell receptor systems. Involved in EGF signaling pathway. Upon stimulation by EGF, it is recruited by EGFR and dephosphorylates PtdIns(3,4,5)P3. Plays a negative role in regulating the PI3K-PKB pathway, possibly by inhibiting PKB activity. Down-regulates Fc-gamma-R-mediated phagocytosis in macrophages independently of INPP5D/SHIP1. In macrophages, down-regulates NF-kappa-B-dependent gene transcription by regulating macrophage colony-stimulating factor (M-CSF)-induced signaling. Plays a role in the localization of AURKA and NEDD9/HEF1 to the basolateral membrane at interphase in polarized cysts, thereby mediates cell cycle homeostasis, cell polarization and cilia assembly. Additionally promotion of cilia growth is also facilitated by hydrolysis of (PtdIns(3,4,5)P3) to PtdIns(3,4)P2. Promotes formation of apical membrane-initiation sites during the initial stages of lumen formation via Rho family-induced actin filament organization and CTNNB1 localization to cell-cell contacts. May also hydrolyze PtdIns(1,3,4,5)P4, and could thus affect the levels of the higher inositol polyphosphates like InsP6. Involved in endochondral ossification. This chain is Phosphatidylinositol 3,4,5-trisphosphate 5-phosphatase 2, found in Canis lupus familiaris (Dog).